Consider the following 122-residue polypeptide: Large ribosomal subunit protein uL14 (122 aa).

It belongs to the universal ribosomal protein uL14 family. Part of the 50S ribosomal subunit. Forms a cluster with proteins L3 and L19. In the 70S ribosome, L14 and L19 interact and together make contacts with the 16S rRNA in bridges B5 and B8.

Functionally, binds to 23S rRNA. Forms part of two intersubunit bridges in the 70S ribosome. The chain is Large ribosomal subunit protein uL14 from Alkalilimnicola ehrlichii (strain ATCC BAA-1101 / DSM 17681 / MLHE-1).